Consider the following 159-residue polypeptide: Cystatin-9 (159 aa).

Residues 1 to 28 (MSSPQRRKAMPWALSLLLMGFQLLVTYA) form the signal peptide.

Belongs to the cystatin family. Expressed in heart, placenta, lung, liver, skeletal muscle and pancreas. Not expressed in brain. Expressed in epididymis, kidney, testis, spinal cord, and thymus with a strong expression in epididymis and kidney and a weak expression in the spinal cord and thymus.

The protein resides in the secreted. In terms of biological role, may be involved in testis development. May play a role in hematopoietic differentiation or inflammation. Has immunomodulatory and antimicrobial functions against Francisella tularensis, a Gram-negative bacteria. This is Cystatin-9 (CST9) from Homo sapiens (Human).